A 473-amino-acid polypeptide reads, in one-letter code: Argininosuccinate lyase (473 aa).

2-(N(omega)-L-arginino)succinate is bound by residues Ser34, Asn121, and Thr166. The active-site Proton acceptor is His167. Ser289 acts as the Proton donor in catalysis. Residues Asn297, Tyr329, and Gln334 each contribute to the 2-(N(omega)-L-arginino)succinate site.

Belongs to the lyase 1 family. Argininosuccinate lyase subfamily.

The catalysed reaction is 2-(N(omega)-L-arginino)succinate = fumarate + L-arginine. It participates in amino-acid biosynthesis; L-arginine biosynthesis; L-arginine from L-ornithine and carbamoyl phosphate: step 3/3. The protein is Argininosuccinate lyase (ARG7) of Chlamydomonas reinhardtii (Chlamydomonas smithii).